A 175-amino-acid polypeptide reads, in one-letter code: Interferon a3 (175 aa).

The signal sequence occupies residues 1–23 (MYTMQSWSCIFLIICSMQSVCHC). Cysteines 24 and 120 form a disulfide.

Belongs to the alpha/beta interferon family. As to expression, isoform 1 and isoform 2 are expressed in several tissues, including gill, spleen, intestine, kidney and skin.

The protein localises to the secreted. It is found in the cytoplasm. It localises to the cytosol. In terms of biological role, key player in antiviral response. Induces expression of TLRs, including that of TLR3, TLR9 and TLR8a1, and that of cytosolic pattern recognition receptors, including RIGI, IFIH1/MDA5 and DHX58/LGP2. Also induces MX1 and its own expression. In the presence of intracellular IFNAR2 (iIFNAR2) and IFNAR1B, intracellular isoform 3 may mediate STAT1 and STAT2 phosphorylation and induction of EIF2AK2, MX1 and RSAD2. The polypeptide is Interferon a3 (Oncorhynchus mykiss (Rainbow trout)).